A 179-amino-acid chain; its full sequence is Large ribosomal subunit protein eL18 (179 aa).

It belongs to the eukaryotic ribosomal protein eL18 family. Component of the large ribosomal subunit.

It is found in the cytoplasm. Its subcellular location is the cytosol. The protein resides in the rough endoplasmic reticulum. Component of the large ribosomal subunit. The ribosome is a large ribonucleoprotein complex responsible for the synthesis of proteins in the cell. In Salmo salar (Atlantic salmon), this protein is Large ribosomal subunit protein eL18 (rpl18).